The sequence spans 121 residues: Type II secretion system protein I (121 aa).

A propeptide spans 1–6 (leader sequence); sequence MNKQKG. N-methylmethionine is present on Met-7. Residues 7–27 form a helical membrane-spanning segment; that stretch reads MTLLEVLVALAIFSLAGLTLL.

It belongs to the GSP I family. Type II secretion is composed of four main components: the outer membrane complex, the inner membrane complex, the cytoplasmic secretion ATPase and the periplasm-spanning pseudopilus. Interacts with core component PulG. Interacts with pseudopilins PulJ and PulK. Cleaved by prepilin peptidase. In terms of processing, methylated by prepilin peptidase at the amino group of the N-terminal methionine once the leader sequence is cleaved by prepilin peptidase.

It is found in the cell inner membrane. In terms of biological role, component of the type II secretion system required for the energy-dependent secretion of extracellular factors such as proteases and toxins from the periplasm. Part of the pseudopilus tip complex that is critical for the recognition and binding of secretion substrates. The sequence is that of Type II secretion system protein I (pulI) from Klebsiella michiganensis (strain ATCC 8724 / DSM 4798 / JCM 20051 / NBRC 3318 / NRRL B-199 / KCTC 1686 / BUCSAV 143 / CCM 1901).